Here is a 754-residue protein sequence, read N- to C-terminus: Ubiquitin carboxyl-terminal hydrolase 9 (754 aa).

Over residues 1–14 the composition is skewed to basic residues; sequence MIKRWLSVNRKKSH. The interval 1-76 is disordered; the sequence is MIKRWLSVNR…SKFSSQTDNL (76 aa). The segment covering 42–58 has biased composition (low complexity); that stretch reads SIAKSPSAKSSTSSIPS. A USP domain is found at 134–667; the sequence is FGYENFGNTC…TAYVLFYKET (534 aa). The Nucleophile role is filled by cysteine 143. Residues 194-209 are compositionally biased toward polar residues; that stretch reads ETSTNSGNSNTGYQSN. Residues 194–273 form a disordered region; sequence ETSTNSGNSN…DNNEMERPQP (80 aa). Over residues 222–233 the composition is skewed to low complexity; the sequence is QSDQDNSSSSTQ. The segment covering 250–272 has biased composition (basic and acidic residues); sequence GKDKSNYKDSAKKDDNNEMERPQ. Catalysis depends on histidine 618, which acts as the Proton acceptor. The tract at residues 726–754 is disordered; sequence VKTAETKTPLNDKKRNKQKRKSRILSFIK. Basic and acidic residues predominate over residues 727 to 738; the sequence is KTAETKTPLNDK. Residues 739-748 are compositionally biased toward basic residues; that stretch reads KRNKQKRKSR.

Belongs to the peptidase C19 family.

The catalysed reaction is Thiol-dependent hydrolysis of ester, thioester, amide, peptide and isopeptide bonds formed by the C-terminal Gly of ubiquitin (a 76-residue protein attached to proteins as an intracellular targeting signal).. In Saccharomyces cerevisiae (strain ATCC 204508 / S288c) (Baker's yeast), this protein is Ubiquitin carboxyl-terminal hydrolase 9 (UBP9).